Consider the following 375-residue polypeptide: Queuine tRNA-ribosyltransferase (375 aa).

D89 functions as the Proton acceptor in the catalytic mechanism. Substrate contacts are provided by residues 89 to 93 (DSGGF), D143, Q187, and G214. Positions 245–251 (GVGKPED) are RNA binding. D264 serves as the catalytic Nucleophile. The RNA binding; important for wobble base 34 recognition stretch occupies residues 269–273 (TRNAR). Residues C302, C304, C307, and H333 each contribute to the Zn(2+) site.

The protein belongs to the queuine tRNA-ribosyltransferase family. Homodimer. Within each dimer, one monomer is responsible for RNA recognition and catalysis, while the other monomer binds to the replacement base PreQ1. Zn(2+) is required as a cofactor.

It catalyses the reaction 7-aminomethyl-7-carbaguanine + guanosine(34) in tRNA = 7-aminomethyl-7-carbaguanosine(34) in tRNA + guanine. It functions in the pathway tRNA modification; tRNA-queuosine biosynthesis. In terms of biological role, catalyzes the base-exchange of a guanine (G) residue with the queuine precursor 7-aminomethyl-7-deazaguanine (PreQ1) at position 34 (anticodon wobble position) in tRNAs with GU(N) anticodons (tRNA-Asp, -Asn, -His and -Tyr). Catalysis occurs through a double-displacement mechanism. The nucleophile active site attacks the C1' of nucleotide 34 to detach the guanine base from the RNA, forming a covalent enzyme-RNA intermediate. The proton acceptor active site deprotonates the incoming PreQ1, allowing a nucleophilic attack on the C1' of the ribose to form the product. After dissociation, two additional enzymatic reactions on the tRNA convert PreQ1 to queuine (Q), resulting in the hypermodified nucleoside queuosine (7-(((4,5-cis-dihydroxy-2-cyclopenten-1-yl)amino)methyl)-7-deazaguanosine). This is Queuine tRNA-ribosyltransferase from Salmonella paratyphi A (strain ATCC 9150 / SARB42).